The chain runs to 278 residues: ATP-dependent dethiobiotin synthetase BioD 1 (278 aa).

51-56 (NVGKTI) contacts ATP. T55 serves as a coordination point for Mg(2+). Residue K76 is part of the active site. D102 lines the ATP pocket. Mg(2+)-binding residues include D102 and E163. ATP is bound by residues 223–224 (NR) and 252–254 (PYI).

The protein belongs to the dethiobiotin synthetase family. Homodimer. It depends on Mg(2+) as a cofactor.

Its subcellular location is the cytoplasm. The enzyme catalyses (7R,8S)-7,8-diammoniononanoate + CO2 + ATP = (4R,5S)-dethiobiotin + ADP + phosphate + 3 H(+). Its pathway is cofactor biosynthesis; biotin biosynthesis; biotin from 7,8-diaminononanoate: step 1/2. Functionally, catalyzes a mechanistically unusual reaction, the ATP-dependent insertion of CO2 between the N7 and N8 nitrogen atoms of 7,8-diaminopelargonic acid (DAPA, also called 7,8-diammoniononanoate) to form a ureido ring. This chain is ATP-dependent dethiobiotin synthetase BioD 1, found in Haemophilus ducreyi (strain 35000HP / ATCC 700724).